Consider the following 717-residue polypeptide: MSFNAKDMTQGGQIASMRIRMFSQIANIMLYCLFIFFWILVGLVLWIKISWQTFVNGCIYWWCTTLEGMRDLIKSQPVYEIQYYGKTFRMNAAQVLHDKYMIWCSEQLWSAFVLAAVVALVICLITFFVVSWILGRQGKQQSENEVTGGRQLTDNPKDVARMLKKDGKDSDIRIGDLPIIRDSEIQNFCLHGTVGAGKSEVIRRLANYARQRGDMVVIYDRSGEFVKSYYDPSIDKILNPLDARCAAWDLWKECLTQPDFDNTANTLIPMGTKEDPFWQGSGRTIFAEAAYLMRNDPNRSYSKLVDTLLSIKIEKLRTYLRNSPAANLVEEKIEKTAISIRAVLTNYVKAIRYLQGIEHNGEPFTIRDWMRGVREDQKNGWLFISSNADTHASLKPVISMWLSIAIRGLLAMGENRNRRVWFFCDELPTLHKLPDLVEILPEARKFGGCYVFGIQSYAQLEDIYGEKAAASLFDVMNTRAFFRSPSHKIAEFAAGEIGEKEHLKASEQYSYGADPVRDGVSTGKDMERQTLVSYSDIQSLPDLTCYVTLPGPYPAVKLSLKYQTRPKVAPEFIPRDINPEMENRLSAVLAAREAEGRQMASLFEPDVPEVVSGEDVTQAEQPQQPVSPAINDKKSDSGVNVPAGGIEQELKMKPEEEMEQQLPPGISESGEVVDMAAYEAWQQENHPDIQQQMQRREEVNINVHRERGEDVEPGDDF.

At 1-27 the chain is on the cytoplasmic side; it reads MSFNAKDMTQGGQIASMRIRMFSQIAN. A helical transmembrane segment spans residues 28–47; it reads IMLYCLFIFFWILVGLVLWI. Topologically, residues 48 to 104 are periplasmic; sequence KISWQTFVNGCIYWWCTTLEGMRDLIKSQPVYEIQYYGKTFRMNAAQVLHDKYMIWC. The chain crosses the membrane as a helical span at residues 105-130; it reads SEQLWSAFVLAAVVALVICLITFFVV. The Cytoplasmic portion of the chain corresponds to 131–717; sequence SWILGRQGKQ…GEDVEPGDDF (587 aa). Position 192-199 (192-199) interacts with ATP; it reads GTVGAGKS. Disordered stretches follow at residues 614-639 and 650-669; these read EDVT…DSGV and LKMK…ISES.

This sequence belongs to the TrwB coupling protein family. In terms of assembly, interacts with relaxosome component TraM. May form a hexamer in the membrane.

It localises to the cell inner membrane. Functionally, conjugative DNA transfer (CDT) is the unidirectional transfer of ssDNA plasmid from a donor to a recipient cell. It is the central mechanism by which antibiotic resistance and virulence factors are propagated in bacterial populations. Couples the transferosome to a type IV secretion system. Probably forms a pore through which single-stranded plasmid DNA is transferred to the secretion system. The last 37 residues are important for determining plasmid specificity and transfer efficiency, with additional specificity conferred by the TraD-TraM pair. The polypeptide is Coupling protein TraD (traD) (Escherichia coli (strain K12)).